Here is an 881-residue protein sequence, read N- to C-terminus: Valine--tRNA ligase (881 aa).

Positions 49–59 (PNVTGKLHLGH) match the 'HIGH' region motif. The 'KMSKS' region motif lies at 526–530 (KMSKS). Lys-529 contributes to the ATP binding site. Positions 810–881 (LADLINLDEE…VRQRLADLEK (72 aa)) form a coiled coil.

It belongs to the class-I aminoacyl-tRNA synthetase family. ValS type 1 subfamily. As to quaternary structure, monomer.

The protein localises to the cytoplasm. The enzyme catalyses tRNA(Val) + L-valine + ATP = L-valyl-tRNA(Val) + AMP + diphosphate. Functionally, catalyzes the attachment of valine to tRNA(Val). As ValRS can inadvertently accommodate and process structurally similar amino acids such as threonine, to avoid such errors, it has a 'posttransfer' editing activity that hydrolyzes mischarged Thr-tRNA(Val) in a tRNA-dependent manner. This is Valine--tRNA ligase from Bacillus anthracis.